The primary structure comprises 433 residues: Protein arginine N-methyltransferase 2 (433 aa).

The tract at residues 1–27 (MSTSGCSSEKSDFQDSTEGEEEEDTQS) is disordered. Residues 15–26 (DSTEGEEEEDTQ) show a composition bias toward acidic residues. Positions 30-89 (LCMREYVVIRDYMAADATQLSLCFGDKVLLLSAVTQDWWWVKHNGICGYVPASYLHDALN) constitute an SH3 domain. The SAM-dependent MTase PRMT-type domain occupies 102 to 416 (DEEYYGSYKT…MSVTLSWVIN (315 aa)). S-adenosyl-L-methionine-binding residues include His115, Arg124, Gly148, Glu171, and Glu200. Active-site residues include Glu214 and Glu223.

This sequence belongs to the class I-like SAM-binding methyltransferase superfamily. Protein arginine N-methyltransferase family. In terms of assembly, interacts with ctnnb1.

The protein resides in the cytoplasm. Its subcellular location is the nucleus. It carries out the reaction L-arginyl-[protein] + 2 S-adenosyl-L-methionine = N(omega),N(omega)-dimethyl-L-arginyl-[protein] + 2 S-adenosyl-L-homocysteine + 2 H(+). In terms of biological role, arginine methyltransferase that methylates the guanidino nitrogens of arginyl residues in proteins such as histones. Involved in growth regulation. Involved in embryonic dorsal development. The protein is Protein arginine N-methyltransferase 2 (prmt2) of Xenopus tropicalis (Western clawed frog).